The primary structure comprises 170 residues: Non-classical export protein 102 (170 aa).

At 1 to 11 (MLAIGDVILRA) the chain is on the cytoplasmic side. The MARVEL domain maps to 6–141 (DVILRAFNFV…TFIFIASAIF (136 aa)). Residues 12 to 32 (FNFVFLVIALGLTGSLAATTI) form a helical membrane-spanning segment. At 33 to 38 (TQHNPQ) the chain is on the extracellular side. A helical transmembrane segment spans residues 39 to 61 (INFAVFAAAFGLLTSSFYGVFAY). Residues 62–76 (FVAAFAWPVILFVFD) lie on the Cytoplasmic side of the membrane. The chain crosses the membrane as a helical span at residues 77-97 (FLNFVFTFAAATAIAAGIRAH). Residues 98 to 125 (SCSNQDYLDDNNIAQGSSGRCRKAQAST) are Extracellular-facing. A helical membrane pass occupies residues 126–146 (AFLYFSTFIFIASAIFSAISL). Topologically, residues 147 to 170 (SKGGLFGHSSRPAPRTGVPTMSQV) are cytoplasmic.

Belongs to the NCE102 family.

The protein localises to the cell membrane. Involved in membrane organization. Involved in a novel pathway of export of proteins that lack a cleavable signal sequence. Non-classical export pathway also functions as an alternative clearance/detoxification pathway to eliminate damaged material, when the basic repair pathway is not sufficient. Regulates actin organization and subsequent morphogenesis and pathogenesis. In Candida albicans (strain SC5314 / ATCC MYA-2876) (Yeast), this protein is Non-classical export protein 102.